The primary structure comprises 413 residues: Tyrosine--tRNA ligase (413 aa).

Residues 57–66 (PTAPDIHLGH) carry the 'HIGH' region motif. Residues 241–245 (KMSKS) carry the 'KMSKS' region motif. ATP is bound at residue lysine 244. The S4 RNA-binding domain occupies 351–412 (VWLPRLMVQA…GKRKFARLHT (62 aa)).

This sequence belongs to the class-I aminoacyl-tRNA synthetase family. TyrS type 2 subfamily. Homodimer.

It is found in the cytoplasm. The catalysed reaction is tRNA(Tyr) + L-tyrosine + ATP = L-tyrosyl-tRNA(Tyr) + AMP + diphosphate + H(+). Its function is as follows. Catalyzes the attachment of tyrosine to tRNA(Tyr) in a two-step reaction: tyrosine is first activated by ATP to form Tyr-AMP and then transferred to the acceptor end of tRNA(Tyr). The chain is Tyrosine--tRNA ligase from Moorella thermoacetica (strain ATCC 39073 / JCM 9320).